Here is a 344-residue protein sequence, read N- to C-terminus: Arginine N-succinyltransferase (344 aa).

Leu125 is a succinyl-CoA binding site. His229 functions as the Proton donor in the catalytic mechanism.

The protein belongs to the arginine N-succinyltransferase family.

It carries out the reaction succinyl-CoA + L-arginine = N(2)-succinyl-L-arginine + CoA + H(+). The protein operates within amino-acid degradation; L-arginine degradation via AST pathway; L-glutamate and succinate from L-arginine: step 1/5. Its function is as follows. Catalyzes the transfer of succinyl-CoA to arginine to produce N(2)-succinylarginine. In Salmonella agona (strain SL483), this protein is Arginine N-succinyltransferase.